The chain runs to 720 residues: Nucleolar protein 11 (720 aa).

The segment at Lys-365–Gly-392 is disordered.

Its subcellular location is the nucleus. The protein localises to the nucleolus. Ribosome biogenesis factor. May be required for both optimal rDNA transcription and pre-rRNA processing. The protein is Nucleolar protein 11 (nol11) of Xenopus laevis (African clawed frog).